The sequence spans 251 residues: Protein crossbronx (251 aa).

The UBC core domain maps to 20–176 (QQEYKILAEY…TRENIRESLA (157 aa)). The tract at residues 211 to 251 (QSKHLESQSQQSNNGGNGGGGGAATGLSWVKEGEFKPLSVE) is disordered. Positions 225–234 (GGNGGGGGAA) are enriched in gly residues.

It belongs to the ubiquitin-conjugating enzyme family. FTS subfamily.

The chain is Protein crossbronx (cbx) from Drosophila willistoni (Fruit fly).